The chain runs to 567 residues: Potassium-transporting ATPase potassium-binding subunit (567 aa).

Transmembrane regions (helical) follow at residues 5–25 (GWIQ…PLGF), 64–84 (TAYA…LYAL), 136–156 (GLTV…IALI), 179–199 (LYVL…LGIP), 254–274 (ISNL…TNVF), 285–305 (WAIL…CYWA), 330–350 (FGIA…CGAV), 357–376 (FTAL…EVIV), 421–441 (MLAI…AVVL), 486–506 (ITIG…ALAI), and 529–549 (LFVG…FFPA).

The protein belongs to the KdpA family. The system is composed of three essential subunits: KdpA, KdpB and KdpC.

Its subcellular location is the cell inner membrane. Its function is as follows. Part of the high-affinity ATP-driven potassium transport (or Kdp) system, which catalyzes the hydrolysis of ATP coupled with the electrogenic transport of potassium into the cytoplasm. This subunit binds the periplasmic potassium ions and delivers the ions to the membrane domain of KdpB through an intramembrane tunnel. This Mesorhizobium japonicum (strain LMG 29417 / CECT 9101 / MAFF 303099) (Mesorhizobium loti (strain MAFF 303099)) protein is Potassium-transporting ATPase potassium-binding subunit.